The primary structure comprises 298 residues: UPF0282 protein Kcr_0286 (298 aa).

This sequence belongs to the UPF0282 family.

The chain is UPF0282 protein Kcr_0286 from Korarchaeum cryptofilum (strain OPF8).